The following is a 278-amino-acid chain: Antiviral protein MAP (278 aa).

An N-terminal signal peptide occupies residues 1 to 28 (MLTTTKVFFLLLTTWITWYAIVNPQSRA). An intrachain disulfide couples Cys64 to Cys248. Glu196 is a catalytic residue.

It catalyses the reaction Endohydrolysis of the N-glycosidic bond at one specific adenosine on the 28S rRNA.. Functionally, inhibits viral infection of plants, and protein synthesis in vitro. This is Antiviral protein MAP from Mirabilis jalapa (Garden four-o'clock).